Here is a 496-residue protein sequence, read N- to C-terminus: Flotillin-like protein 3 (496 aa).

Cys-37 carries S-palmitoyl cysteine lipidation. Residues 301–328 (VVREAELQLEVERKNALRLTEKLKAEKL) adopt a coiled-coil conformation.

The protein belongs to the band 7/mec-2 family. Flotillin subfamily. In terms of processing, may be palmitoylated.

The protein localises to the cell membrane. The protein resides in the membrane. Its subcellular location is the caveola. Functionally, may act as a scaffolding protein within caveolar membranes, functionally participating in formation of caveolae or caveolae-like vesicles. The protein is Flotillin-like protein 3 (FLOT3) of Oryza sativa subsp. japonica (Rice).